Reading from the N-terminus, the 428-residue chain is Phosphoribosylamine--glycine ligase (428 aa).

Residues 107-313 (KQVMKTYNIP…LVNVIESLLD (207 aa)) enclose the ATP-grasp domain. ATP is bound at residue 133–194 (VEAEGVPIVI…EEYLEGEELS (62 aa)). Mg(2+) contacts are provided by Glu-283 and Asn-285.

Belongs to the GARS family. It depends on Mg(2+) as a cofactor. Mn(2+) is required as a cofactor.

It catalyses the reaction 5-phospho-beta-D-ribosylamine + glycine + ATP = N(1)-(5-phospho-beta-D-ribosyl)glycinamide + ADP + phosphate + H(+). It participates in purine metabolism; IMP biosynthesis via de novo pathway; N(1)-(5-phospho-D-ribosyl)glycinamide from 5-phospho-alpha-D-ribose 1-diphosphate: step 2/2. In Halalkalibacterium halodurans (strain ATCC BAA-125 / DSM 18197 / FERM 7344 / JCM 9153 / C-125) (Bacillus halodurans), this protein is Phosphoribosylamine--glycine ligase.